The sequence spans 318 residues: Biotin synthase (318 aa).

Residues 46 to 272 (DGVDVEQLNN…RSVVKISGGR (227 aa)) enclose the Radical SAM core domain. [4Fe-4S] cluster is bound by residues C61, C65, and C68. [2Fe-2S] cluster contacts are provided by C105, C138, C197, and K267.

The protein belongs to the radical SAM superfamily. Biotin synthase family. Homodimer. It depends on [4Fe-4S] cluster as a cofactor. [2Fe-2S] cluster is required as a cofactor.

It carries out the reaction (4R,5S)-dethiobiotin + (sulfur carrier)-SH + 2 reduced [2Fe-2S]-[ferredoxin] + 2 S-adenosyl-L-methionine = (sulfur carrier)-H + biotin + 2 5'-deoxyadenosine + 2 L-methionine + 2 oxidized [2Fe-2S]-[ferredoxin]. Its pathway is cofactor biosynthesis; biotin biosynthesis; biotin from 7,8-diaminononanoate: step 2/2. Functionally, catalyzes the conversion of dethiobiotin (DTB) to biotin by the insertion of a sulfur atom into dethiobiotin via a radical-based mechanism. This Cenarchaeum symbiosum (strain A) protein is Biotin synthase.